A 93-amino-acid polypeptide reads, in one-letter code: Small ribosomal subunit protein uS19 (93 aa).

The protein belongs to the universal ribosomal protein uS19 family.

In terms of biological role, protein S19 forms a complex with S13 that binds strongly to the 16S ribosomal RNA. The sequence is that of Small ribosomal subunit protein uS19 from Salinispora tropica (strain ATCC BAA-916 / DSM 44818 / JCM 13857 / NBRC 105044 / CNB-440).